The primary structure comprises 365 residues: tRNA-specific 2-thiouridylase MnmA (365 aa).

Residues 14 to 21 and Leu40 each bind ATP; that span reads AMSGGVDS. The active-site Nucleophile is the Cys108. The cysteines at positions 108 and 204 are disulfide-linked. ATP is bound at residue Gly132. The tract at residues 154-156 is interaction with tRNA; the sequence is KDQ. The active-site Cysteine persulfide intermediate is the Cys204.

It belongs to the MnmA/TRMU family.

Its subcellular location is the cytoplasm. The enzyme catalyses S-sulfanyl-L-cysteinyl-[protein] + uridine(34) in tRNA + AH2 + ATP = 2-thiouridine(34) in tRNA + L-cysteinyl-[protein] + A + AMP + diphosphate + H(+). In terms of biological role, catalyzes the 2-thiolation of uridine at the wobble position (U34) of tRNA, leading to the formation of s(2)U34. This is tRNA-specific 2-thiouridylase MnmA from Rickettsia peacockii (strain Rustic).